Here is a 445-residue protein sequence, read N- to C-terminus: N-succinylarginine dihydrolase (445 aa).

Residues 19–28 (AGLSFGNVAS), N110, and 137–138 (HR) contribute to the substrate site. E174 is an active-site residue. A substrate-binding site is contributed by R214. The active site involves H250. 2 residues coordinate substrate: D252 and N363. C369 serves as the catalytic Nucleophile.

It belongs to the succinylarginine dihydrolase family. As to quaternary structure, homodimer.

It carries out the reaction N(2)-succinyl-L-arginine + 2 H2O + 2 H(+) = N(2)-succinyl-L-ornithine + 2 NH4(+) + CO2. It functions in the pathway amino-acid degradation; L-arginine degradation via AST pathway; L-glutamate and succinate from L-arginine: step 2/5. Its function is as follows. Catalyzes the hydrolysis of N(2)-succinylarginine into N(2)-succinylornithine, ammonia and CO(2). The sequence is that of N-succinylarginine dihydrolase from Shewanella woodyi (strain ATCC 51908 / MS32).